A 334-amino-acid polypeptide reads, in one-letter code: Glutaredoxin-3 (334 aa).

An N-acetylalanine modification is found at A2. The Thioredoxin domain maps to A2–S116. Residues K110–D131 form a disordered region. Phosphoserine is present on residues S116 and S119. Residues S116 to S125 are compositionally biased toward low complexity. 2 Glutaredoxin domains span residues C145–E235 and E236–N334. Positions 158 and 260 each coordinate [2Fe-2S] cluster.

In terms of assembly, homodimer; the homodimer is independent of 2Fe-2S clusters. Heterotrimer; forms a heterotrimeric complex composed by two BOLA2 molecules and one GLRX3 molecule; linked by [2Fe-2S] clusters. Interacts (via N-terminus) with PRKCQ/PKC-theta. Interacts (via C-terminus) with CSRP3. Interacts with CSRP2.

The protein localises to the cytoplasm. Its subcellular location is the cytosol. It is found in the cell cortex. The protein resides in the myofibril. It localises to the sarcomere. The protein localises to the z line. Together with BOLA2, acts as a cytosolic iron-sulfur (Fe-S) cluster assembly factor that facilitates [2Fe-2S] cluster insertion into a subset of cytosolic proteins. Acts as a critical negative regulator of cardiac hypertrophy and a positive inotropic regulator. Required for hemoglobin maturation. Does not possess any thyoredoxin activity since it lacks the conserved motif that is essential for catalytic activity. This is Glutaredoxin-3 (GLRX3) from Bos taurus (Bovine).